The chain runs to 55 residues: Large ribosomal subunit protein eL40 (55 aa).

Belongs to the eukaryotic ribosomal protein eL40 family.

In Ignicoccus hospitalis (strain KIN4/I / DSM 18386 / JCM 14125), this protein is Large ribosomal subunit protein eL40.